The following is an 82-amino-acid chain: Cytotoxin homolog Clbp-3 (82 aa).

An N-terminal signal peptide occupies residues 1–21; sequence MKTLLLTLVVVTIVCLDLGYT. 4 disulfides stabilise this stretch: Cys24-Cys43, Cys36-Cys60, Cys64-Cys75, and Cys76-Cys81.

The protein belongs to the three-finger toxin family. Short-chain subfamily. Orphan group XV sub-subfamily. As to expression, expressed by the venom gland.

It is found in the secreted. Its subcellular location is the target cell membrane. In terms of biological role, has low cytotoxic activity. The polypeptide is Cytotoxin homolog Clbp-3 (Naja atra (Chinese cobra)).